Reading from the N-terminus, the 963-residue chain is Importin-13 (963 aa).

HEAT repeat units follow at residues 24 to 54 (ESVEKALHQLYYDPNIENKNLAQKWLMQAQV), 56 to 88 (PQAWHFSWQLLQPDKVPEIQYFGASALPIKTSR), 95 to 135 (TDQY…LSMM), 142 to 179 (AVADMVRLFQAEDSPVDGQGRCLALLELLTVLPEEFQT), 194 to 231 (LAVECGAVFPLLEQLLQQPSSPSCVRQKVLKCFSSWVQ), 236 to 268 (LQDCEALIQAAFAALQDSELFDSSVEAIVNAIS), 276 to 325 (VNTL…ALLD), 330 to 372 (WQSF…DDIL), 375 to 438 (EAEK…YEML), 440 to 476 (AELLSNLYDKLGRLLTSSEEPYSWQHTEALLYGFQSI), 487 to 522 (VVPGLIGLIPRISISNVQLADTVMFTIGALSEWLAD), 524 to 558 (PVMINSVLPLVLHALGNPEPSVSSVSTLKKICREC), 562 to 600 (LPPYAANIVAVSQDVLMKQIHKTSQCMWLMQALGFLLSA), 603 to 648 (VEEI…SNLF), 676 to 716 (PVVV…VKTL), 720 to 754 (FAPMVPQLCEMLGRMYSTIPQASALDLTRQLVHIF), 761 to 803 (FPPI…ALKR), 815 to 845 (VKAVFQCAVLALKFPEAPTVKASCGFFTELL), 860 to 893 (EDGRMLLIAVLEAIGGQASRSLMDCFADILFALN), and 897 to 931 (FSLLSMWIKEALQPPGFPSARLSPEQKDTFSQQIL). One can recognise an Importin N-terminal domain in the interval 45–111 (AQKWLMQAQV…KAQLFTQITR (67 aa)).

It belongs to the importin beta family. As to quaternary structure, interacts with UBC9, RAN, RBM8A, eIF-1A and PAX6.

It is found in the cytoplasm. The protein resides in the nucleus. Functionally, functions in nuclear protein import as nuclear transport receptor. Serves as receptor for nuclear localization signals (NLS) in cargo substrates. Is thought to mediate docking of the importin/substrate complex to the nuclear pore complex (NPC) through binding to nucleoporin and the complex is subsequently translocated through the pore by an energy requiring, Ran-dependent mechanism. At the nucleoplasmic side of the NPC, Ran binds to the importin, the importin/substrate complex dissociates and importin is re-exported from the nucleus to the cytoplasm where GTP hydrolysis releases Ran. The directionality of nuclear import is thought to be conferred by an asymmetric distribution of the GTP- and GDP-bound forms of Ran between the cytoplasm and nucleus. Mediates the nuclear import of UBC9, the RBM8A/MAGOH complex, PAX6 and probably other members of the paired homeobox family. Also mediates nuclear export of eIF-1A, and the cytoplasmic release of eIF-1A is triggered by the loading of import substrates onto IPO13. This chain is Importin-13 (IPO13), found in Pongo abelii (Sumatran orangutan).